Consider the following 159-residue polypeptide: Transcriptional repressor NrdR (159 aa).

A zinc finger lies at 3–34; the sequence is CPYCQSEDTQVKDSRPAEDGAAIRRRRVCPDC. Residues 49 to 139 form the ATP-cone domain; sequence LVVVKKSGRK…VYRNFREAKD (91 aa).

This sequence belongs to the NrdR family. Zn(2+) serves as cofactor.

Functionally, negatively regulates transcription of bacterial ribonucleotide reductase nrd genes and operons by binding to NrdR-boxes. This chain is Transcriptional repressor NrdR, found in Mesorhizobium japonicum (strain LMG 29417 / CECT 9101 / MAFF 303099) (Mesorhizobium loti (strain MAFF 303099)).